The chain runs to 486 residues: Galactose-3-O-sulfotransferase 4 (486 aa).

Residues 1 to 18 (MGPLSPARTLRLWGPRSL) lie on the Cytoplasmic side of the membrane. A helical; Signal-anchor for type II membrane protein transmembrane segment spans residues 19–39 (GVALGVFMTIGFALQLLGGPF). Topologically, residues 40 to 486 (QRRLPGLQLR…PLKTSRPLSP (447 aa)) are lumenal. Asparagine 374 carries N-linked (GlcNAc...) asparagine glycosylation.

Belongs to the galactose-3-O-sulfotransferase family. The cofactor is Mn(2+). As to expression, expressed mainly in placenta, thymus, testis, ovary, spinal cord, trachea and adrenal gland and at low levels in brain, lung, spleen, prostate, small intestine, colon, stomach thyroid and lymph node.

It localises to the golgi apparatus. The protein resides in the golgi stack membrane. Its pathway is protein modification; carbohydrate sulfation. Catalyzes the transfer of sulfate to beta-1,3-linked galactose residues in O-linked glycoproteins. Good substrates include asialofetuin, Gal-beta-1,3-GalNAc and Gal-beta-1,3 (GlcNAc-beta-1,6)GalNAc. The polypeptide is Galactose-3-O-sulfotransferase 4 (GAL3ST4) (Homo sapiens (Human)).